A 133-amino-acid polypeptide reads, in one-letter code: ATP synthase epsilon chain (133 aa).

A disordered region spans residues 103–133; sequence VSQMEGQEPSTEKIKAQQNFNRARARVQATK.

The protein belongs to the ATPase epsilon chain family. In terms of assembly, F-type ATPases have 2 components, CF(1) - the catalytic core - and CF(0) - the membrane proton channel. CF(1) has five subunits: alpha(3), beta(3), gamma(1), delta(1), epsilon(1). CF(0) has three main subunits: a, b and c.

It is found in the cellular thylakoid membrane. Produces ATP from ADP in the presence of a proton gradient across the membrane. The sequence is that of ATP synthase epsilon chain from Prochlorococcus marinus (strain MIT 9313).